Consider the following 148-residue polypeptide: Probable histone H2B.2 (148 aa).

Positions 1–32 are enriched in basic and acidic residues; that stretch reads MAPKGEKKPAEKKPAEEKKSTVAEKAPAEKKP. Residues 1–57 form a disordered region; sequence MAPKGEKKPAEKKPAEEKKSTVAEKAPAEKKPKAGKKLPKEGGSAAGEKKKKRSKKS. Residues K7, K36, and K37 each carry the N6-acetyllysine modification. K144 participates in a covalent cross-link: Glycyl lysine isopeptide (Lys-Gly) (interchain with G-Cter in ubiquitin).

It belongs to the histone H2B family. As to quaternary structure, the nucleosome is a histone octamer containing two molecules each of H2A, H2B, H3 and H4 assembled in one H3-H4 heterotetramer and two H2A-H2B heterodimers. The octamer wraps approximately 147 bp of DNA. Post-translationally, can be acetylated to form H2BK6ac, H2BK33ac and H2BK34ac. Monoubiquitinated to form H2BK143ub1; may give a specific tag for epigenetic transcriptional activation.

Its subcellular location is the nucleus. It is found in the chromosome. In terms of biological role, core component of nucleosome. Nucleosomes wrap and compact DNA into chromatin, limiting DNA accessibility to the cellular machineries which require DNA as a template. Histones thereby play a central role in transcription regulation, DNA repair, DNA replication and chromosomal stability. DNA accessibility is regulated via a complex set of post-translational modifications of histones, also called histone code, and nucleosome remodeling. The polypeptide is Probable histone H2B.2 (Medicago truncatula (Barrel medic)).